Here is a 159-residue protein sequence, read N- to C-terminus: Ribosomal RNA large subunit methyltransferase H (159 aa).

S-adenosyl-L-methionine contacts are provided by residues G108 and 127–132; that span reads FGPMTF.

This sequence belongs to the RNA methyltransferase RlmH family. As to quaternary structure, homodimer.

The protein localises to the cytoplasm. It catalyses the reaction pseudouridine(1915) in 23S rRNA + S-adenosyl-L-methionine = N(3)-methylpseudouridine(1915) in 23S rRNA + S-adenosyl-L-homocysteine + H(+). In terms of biological role, specifically methylates the pseudouridine at position 1915 (m3Psi1915) in 23S rRNA. The protein is Ribosomal RNA large subunit methyltransferase H of Magnetococcus marinus (strain ATCC BAA-1437 / JCM 17883 / MC-1).